Reading from the N-terminus, the 228-residue chain is Leucyl/phenylalanyl-tRNA--protein transferase (228 aa).

It belongs to the L/F-transferase family.

The protein resides in the cytoplasm. It carries out the reaction N-terminal L-lysyl-[protein] + L-leucyl-tRNA(Leu) = N-terminal L-leucyl-L-lysyl-[protein] + tRNA(Leu) + H(+). It catalyses the reaction N-terminal L-arginyl-[protein] + L-leucyl-tRNA(Leu) = N-terminal L-leucyl-L-arginyl-[protein] + tRNA(Leu) + H(+). The enzyme catalyses L-phenylalanyl-tRNA(Phe) + an N-terminal L-alpha-aminoacyl-[protein] = an N-terminal L-phenylalanyl-L-alpha-aminoacyl-[protein] + tRNA(Phe). Its function is as follows. Functions in the N-end rule pathway of protein degradation where it conjugates Leu, Phe and, less efficiently, Met from aminoacyl-tRNAs to the N-termini of proteins containing an N-terminal arginine or lysine. In Lawsonia intracellularis (strain PHE/MN1-00), this protein is Leucyl/phenylalanyl-tRNA--protein transferase.